A 398-amino-acid chain; its full sequence is Putative defective protein IntQ (398 aa).

Positions 51–146 (LTIKELAEKF…NLNAVFQFGV (96 aa)) constitute a Core-binding (CB) domain. The Tyr recombinase domain occupies 167-378 (TIPDPLSREE…SENNNAQVAL (212 aa)). Catalysis depends on residues Arg-202, Lys-236, Arg-331, and His-354. The O-(3'-phospho-DNA)-tyrosine intermediate role is filled by Tyr-364.

This sequence belongs to the 'phage' integrase family.

In terms of biological role, integrase is necessary for integration of the phage into the host genome by site-specific recombination. In conjunction with excisionase, integrase is also necessary for excision of the prophage from the host genome. This chain is Putative defective protein IntQ (intQ), found in Escherichia coli (strain K12).